A 152-amino-acid polypeptide reads, in one-letter code: Deoxyuridine 5'-triphosphate nucleotidohydrolase (152 aa).

Substrate contacts are provided by residues 71–73, Asn84, 88–90, and Met98; these read RSG and LID.

Belongs to the dUTPase family. Requires Mg(2+) as cofactor.

It carries out the reaction dUTP + H2O = dUMP + diphosphate + H(+). The protein operates within pyrimidine metabolism; dUMP biosynthesis; dUMP from dCTP (dUTP route): step 2/2. Functionally, this enzyme is involved in nucleotide metabolism: it produces dUMP, the immediate precursor of thymidine nucleotides and it decreases the intracellular concentration of dUTP so that uracil cannot be incorporated into DNA. This chain is Deoxyuridine 5'-triphosphate nucleotidohydrolase, found in Salmonella agona (strain SL483).